Here is a 452-residue protein sequence, read N- to C-terminus: Transcription factor ETV6 (452 aa).

The span at 1–10 shows a compositional bias: polar residues; the sequence is MSETPAQCSI. The interval 1–30 is disordered; sequence MSETPAQCSIKQERISYTPPESPVPSYASS. Residue lysine 11 is modified to N6-acetyllysine; alternate. A Glycyl lysine isopeptide (Lys-Gly) (interchain with G-Cter in SUMO2); alternate cross-link involves residue lysine 11. Threonine 18 is subject to Phosphothreonine. Serine 22 is subject to Phosphoserine. Residues 40–124 form the PNT domain; it reads ALRMEEDSIR…ELLQHILKQR (85 aa). A disordered region spans residues 158–262; it reads VQRTPRPSVD…PKPSSPRQES (105 aa). A phosphoserine mark is found at serine 213 and serine 238. The span at 230 to 250 shows a compositional bias: polar residues; sequence QESYPLSVSPMENNHCPASSE. Phosphoserine; by MAPK14 is present on serine 257. A Glycyl lysine isopeptide (Lys-Gly) (interchain with G-Cter in SUMO2) cross-link involves residue lysine 288. Residue lysine 302 is modified to N6-acetyllysine; alternate. Lysine 302 participates in a covalent cross-link: Glycyl lysine isopeptide (Lys-Gly) (interchain with G-Cter in SUMO2); alternate. Serine 323 is subject to Phosphoserine. The segment at residues 339–420 is a DNA-binding region (ETS); it reads RLLWDYVYQL…PGQRLLFRFM (82 aa). Residues lysine 403 and lysine 421 each participate in a glycyl lysine isopeptide (Lys-Gly) (interchain with G-Cter in SUMO2) cross-link.

The protein belongs to the ETS family. Can form homodimers or heterodimers with TEL2 or FLI1. Interacts with L3MBTL1 and HDAC9. Post-translationally, phosphorylation of Ser-257 by MAPK14 (p38) inhibits ETV6 transcriptional repression. Ubiquitous.

Its subcellular location is the nucleus. Functionally, transcriptional repressor; binds to the DNA sequence 5'-CCGGAAGT-3'. Plays a role in hematopoiesis and malignant transformation. The sequence is that of Transcription factor ETV6 (ETV6) from Homo sapiens (Human).